The sequence spans 68 residues: Large ribosomal subunit protein uL29 (68 aa).

The protein belongs to the universal ribosomal protein uL29 family.

The protein is Large ribosomal subunit protein uL29 of Finegoldia magna (strain ATCC 29328 / DSM 20472 / WAL 2508) (Peptostreptococcus magnus).